Consider the following 96-residue polypeptide: Protein RnfH (96 aa).

It belongs to the UPF0125 (RnfH) family.

The protein is Protein RnfH of Klebsiella pneumoniae (strain 342).